The primary structure comprises 530 residues: tRNA-2-methylthio-N(6)-dimethylallyladenosine synthase (530 aa).

Positions 19-134 constitute an MTTase N-terminal domain; sequence RTYEVRTYGC…LPTLLERARH (116 aa). Residues cysteine 28, cysteine 63, cysteine 97, cysteine 171, cysteine 175, and cysteine 178 each coordinate [4Fe-4S] cluster. Positions 157 to 387 constitute a Radical SAM core domain; sequence RDEIASGWVS…TALQERISHE (231 aa). One can recognise a TRAM domain in the interval 390-460; that stretch reads QRVVGRTVEV…PFHLIADSVD (71 aa). The interval 509–530 is disordered; sequence VPTTASTSAPVGDGSAHPRHRA.

It belongs to the methylthiotransferase family. MiaB subfamily. In terms of assembly, monomer. The cofactor is [4Fe-4S] cluster.

Its subcellular location is the cytoplasm. It catalyses the reaction N(6)-dimethylallyladenosine(37) in tRNA + (sulfur carrier)-SH + AH2 + 2 S-adenosyl-L-methionine = 2-methylsulfanyl-N(6)-dimethylallyladenosine(37) in tRNA + (sulfur carrier)-H + 5'-deoxyadenosine + L-methionine + A + S-adenosyl-L-homocysteine + 2 H(+). Its function is as follows. Catalyzes the methylthiolation of N6-(dimethylallyl)adenosine (i(6)A), leading to the formation of 2-methylthio-N6-(dimethylallyl)adenosine (ms(2)i(6)A) at position 37 in tRNAs that read codons beginning with uridine. This chain is tRNA-2-methylthio-N(6)-dimethylallyladenosine synthase, found in Clavibacter sepedonicus (Clavibacter michiganensis subsp. sepedonicus).